The chain runs to 1383 residues: DNA-directed RNA polymerase subunit beta (1383 aa).

Belongs to the RNA polymerase beta chain family. In terms of assembly, the RNAP catalytic core consists of 2 alpha, 1 beta, 1 beta' and 1 omega subunit. When a sigma factor is associated with the core the holoenzyme is formed, which can initiate transcription.

The enzyme catalyses RNA(n) + a ribonucleoside 5'-triphosphate = RNA(n+1) + diphosphate. Functionally, DNA-dependent RNA polymerase catalyzes the transcription of DNA into RNA using the four ribonucleoside triphosphates as substrates. The sequence is that of DNA-directed RNA polymerase subunit beta from Bartonella henselae (strain ATCC 49882 / DSM 28221 / CCUG 30454 / Houston 1) (Rochalimaea henselae).